Here is a 189-residue protein sequence, read N- to C-terminus: MIDLITQLIRPDIRALSAYHVPDPAGLIKLDAMENPYGWPDTLKAEWLEGMHDLALNRYPDPQGTAVQAALRQAMGIPSDMGLLLGNGSDELIQMLAIAVAQPGRKVLSLDPGFVMYRMIACFAGMDYVGVPLRSDDFSIDLPVMLDAIEREQPALIYLAYPNNPTGNRFDSDDMVRIIEAAPGLVIVD.

It belongs to the class-II pyridoxal-phosphate-dependent aminotransferase family. Histidinol-phosphate aminotransferase subfamily. As to quaternary structure, homodimer. Pyridoxal 5'-phosphate is required as a cofactor.

The catalysed reaction is L-histidinol phosphate + 2-oxoglutarate = 3-(imidazol-4-yl)-2-oxopropyl phosphate + L-glutamate. It functions in the pathway amino-acid biosynthesis; L-histidine biosynthesis; L-histidine from 5-phospho-alpha-D-ribose 1-diphosphate: step 7/9. The polypeptide is Histidinol-phosphate aminotransferase (hisC) (Thiocapsa roseopersicina).